A 485-amino-acid chain; its full sequence is Podocalyxin (485 aa).

A signal peptide spans 1 to 24 (MRPTLALSALLLLQLLLLSTPSLS). The interval 22–267 (SLSQDNGNKT…STPSSTWTSG (246 aa)) is disordered. Over 25-386 (QDNGNKTDTS…PPEVNEDRFS (362 aa)) the chain is Extracellular. Over residues 26 to 57 (DNGNKTDTSDITSIDQNQDKPATNQPSNATPK) the composition is skewed to polar residues. N-linked (GlcNAc...) asparagine glycans are attached at residues Asn29 and Asn82. Residues 58 to 109 (SSVQPPTPTSISTSSPDPKATQSSNSSVTTTSDSTTDRTSSSTSTVPTTSNS) are compositionally biased toward low complexity. 2 stretches are compositionally biased toward polar residues: residues 110–128 (GQTVSSGGKSSDKITTALP) and 135–149 (NASSQPTDLNTSTKL). Asn135, Asn144, and Asn156 each carry an N-linked (GlcNAc...) asparagine glycan. The span at 150–161 (PSTPTTNSTASP) shows a compositional bias: low complexity. 3 stretches are compositionally biased toward polar residues: residues 163–176 (QPVSHSEGQHTTVQ), 186–228 (DNTT…QPTG), and 235–253 (SVPTTEEFTHSTSSWTPVV). The N-linked (GlcNAc...) asparagine glycan is linked to Asn187. Positions 254 to 267 (SQGPSTPSSTWTSG) are enriched in low complexity. An N-linked (GlcNAc...) asparagine glycan is attached at Asn287. The chain crosses the membrane as a helical span at residues 387–407 (LPLIITIVCMASFLLLVAALY). Residues 408–485 (GCCHQRISQR…DLDEEEDTHL (78 aa)) lie on the Cytoplasmic side of the membrane. A Phosphothreonine modification is found at Thr445. Ser464 is subject to Phosphoserine. Phosphothreonine is present on Thr483.

This sequence belongs to the podocalyxin family. In terms of assembly, monomer; when associated with the membrane raft. Oligomer; when integrated in the apical membrane. Interacts with NHERF2. Interacts (via the C-terminal PDZ-binding motif DTHL) with NHERF1 (via the PDZ domains); the interaction take place early in the secretory pathway and is necessary for its apical membrane sorting. Found in a complex with EZR, PODXL and NHERF2. Associates with the actin cytoskeleton through complex formation with EZR and NHERF2. Interacts (via the C-terminal PDZ-binding motif DTHL) with NHERF1 (via the PDZ domains); interaction is not detected in glomerular epithelium cells. Interacts (via the C-terminal PDZ-binding motif DTHL) with NHERF2 (via the PDZ 1 domain); interaction is detected in glomerular epithelium cells. Interacts with EZR. Post-translationally, N- and O-linked glycosylated. Sialoglycoprotein. As to expression, glomerular epithelium cell (podocyte) (at protein level).

The protein resides in the apical cell membrane. Its subcellular location is the cell projection. The protein localises to the microvillus. It localises to the membrane raft. It is found in the lamellipodium. The protein resides in the filopodium. Its subcellular location is the ruffle. The protein localises to the membrane. Involved in the regulation of both adhesion and cell morphology and cancer progression. Functions as an anti-adhesive molecule that maintains an open filtration pathway between neighboring foot processes in the podocyte by charge repulsion. Acts as a pro-adhesive molecule, enhancing the adherence of cells to immobilized ligands, increasing the rate of migration and cell-cell contacts in an integrin-dependent manner. Induces the formation of apical actin-dependent microvilli. Involved in the formation of a preapical plasma membrane subdomain to set up initial epithelial polarization and the apical lumen formation during renal tubulogenesis. Plays a role in cancer development and aggressiveness by inducing cell migration and invasion through its interaction with the actin-binding protein EZR. Affects EZR-dependent signaling events, leading to increased activities of the MAPK and PI3K pathways in cancer cells. The sequence is that of Podocalyxin (Podxl) from Rattus norvegicus (Rat).